Reading from the N-terminus, the 229-residue chain is MGNILTCCINSHCGWPRGKDAPCYESDTDIYETVAAATSESTTVEPGKLDVGATEGQDLQHISNQKMPTGPPEDRLSLKFLPSSEEDNDDAKILPSPVQGSSEDNLSLVCLPRSEDDDCDDDDDDDAQILPSRVQGGCYRFDSSSCSSEDNLSLVCLPRSEDDDCDDDDDDAQILPSPVQACSEDSLFLRCSLRHKDEEEEDDDDIHITARIESDLTLESLSDEEIHPG.

The tract at residues 84-106 (SEEDNDDAKILPSPVQGSSEDNL) is disordered.

This is Aspartate-rich protein 1 (DRICH1) from Homo sapiens (Human).